The sequence spans 307 residues: Ribosomal RNA small subunit methyltransferase H (307 aa).

Residues 34 to 36, aspartate 53, leucine 88, aspartate 102, and glutamine 109 each bind S-adenosyl-L-methionine; that span reads GGH.

Belongs to the methyltransferase superfamily. RsmH family.

The protein resides in the cytoplasm. The catalysed reaction is cytidine(1402) in 16S rRNA + S-adenosyl-L-methionine = N(4)-methylcytidine(1402) in 16S rRNA + S-adenosyl-L-homocysteine + H(+). Specifically methylates the N4 position of cytidine in position 1402 (C1402) of 16S rRNA. This chain is Ribosomal RNA small subunit methyltransferase H, found in Sulfurimonas denitrificans (strain ATCC 33889 / DSM 1251) (Thiomicrospira denitrificans (strain ATCC 33889 / DSM 1251)).